Reading from the N-terminus, the 273-residue chain is Type II restriction enzyme HgiCII (273 aa).

The protein belongs to the TdeIII type II restriction endonuclease family.

The enzyme catalyses Endonucleolytic cleavage of DNA to give specific double-stranded fragments with terminal 5'-phosphates.. In terms of biological role, a P subtype restriction enzyme that recognizes the double-stranded sequence 5'-GGWCC-3' and cleaves after G-1. This Herpetosiphon aurantiacus (Herpetosiphon giganteus) protein is Type II restriction enzyme HgiCII.